We begin with the raw amino-acid sequence, 542 residues long: CTP synthase (542 aa).

An amidoligase domain region spans residues 1–265 (MTRYIFVTGG…DDFVVERFGL (265 aa)). Residue S13 participates in CTP binding. S13 serves as a coordination point for UTP. ATP contacts are provided by residues 14 to 19 (SLGKGI) and D71. Positions 71 and 139 each coordinate Mg(2+). CTP-binding positions include 146 to 148 (DIE), 186 to 191 (KTKPTQ), and K222. UTP contacts are provided by residues 186–191 (KTKPTQ) and K222. Residues 290 to 541 (TIAMVGKYME…VKAALAQKNK (252 aa)) form the Glutamine amidotransferase type-1 domain. L-glutamine is bound at residue G351. The Nucleophile; for glutamine hydrolysis role is filled by C378. Residues 379 to 382 (LGMQ), E402, and R469 contribute to the L-glutamine site. Catalysis depends on residues H514 and E516.

The protein belongs to the CTP synthase family. In terms of assembly, homotetramer.

The catalysed reaction is UTP + L-glutamine + ATP + H2O = CTP + L-glutamate + ADP + phosphate + 2 H(+). The enzyme catalyses L-glutamine + H2O = L-glutamate + NH4(+). It catalyses the reaction UTP + NH4(+) + ATP = CTP + ADP + phosphate + 2 H(+). The protein operates within pyrimidine metabolism; CTP biosynthesis via de novo pathway; CTP from UDP: step 2/2. Allosterically activated by GTP, when glutamine is the substrate; GTP has no effect on the reaction when ammonia is the substrate. The allosteric effector GTP functions by stabilizing the protein conformation that binds the tetrahedral intermediate(s) formed during glutamine hydrolysis. Inhibited by the product CTP, via allosteric rather than competitive inhibition. Functionally, catalyzes the ATP-dependent amination of UTP to CTP with either L-glutamine or ammonia as the source of nitrogen. Regulates intracellular CTP levels through interactions with the four ribonucleotide triphosphates. This chain is CTP synthase, found in Pseudomonas entomophila (strain L48).